Reading from the N-terminus, the 429-residue chain is Adenylosuccinate synthetase (429 aa).

GTP-binding positions include 12 to 18 and 40 to 42; these read GDEGKGK and GHT. Aspartate 13 serves as the catalytic Proton acceptor. The Mg(2+) site is built by aspartate 13 and glycine 40. IMP is bound by residues 13–16, 38–41, threonine 128, arginine 142, glutamine 223, threonine 238, and arginine 302; these read DEGK and NAGH. The active-site Proton donor is histidine 41. 298–304 serves as a coordination point for substrate; sequence TVTGRPR. Residues arginine 304, 330–332, and 412–414 each bind GTP; these read LLD and SVG.

The protein belongs to the adenylosuccinate synthetase family. Homodimer. Mg(2+) serves as cofactor.

The protein localises to the cytoplasm. It catalyses the reaction IMP + L-aspartate + GTP = N(6)-(1,2-dicarboxyethyl)-AMP + GDP + phosphate + 2 H(+). Its pathway is purine metabolism; AMP biosynthesis via de novo pathway; AMP from IMP: step 1/2. Its function is as follows. Plays an important role in the de novo pathway of purine nucleotide biosynthesis. Catalyzes the first committed step in the biosynthesis of AMP from IMP. This chain is Adenylosuccinate synthetase, found in Lactobacillus acidophilus (strain ATCC 700396 / NCK56 / N2 / NCFM).